The sequence spans 474 residues: 2-succinylbenzoate--CoA ligase (474 aa).

It belongs to the ATP-dependent AMP-binding enzyme family. MenE subfamily.

The catalysed reaction is 2-succinylbenzoate + ATP + CoA = 2-succinylbenzoyl-CoA + AMP + diphosphate. Its pathway is quinol/quinone metabolism; 1,4-dihydroxy-2-naphthoate biosynthesis; 1,4-dihydroxy-2-naphthoate from chorismate: step 5/7. It participates in quinol/quinone metabolism; menaquinone biosynthesis. In terms of biological role, converts 2-succinylbenzoate (OSB) to 2-succinylbenzoyl-CoA (OSB-CoA). In Staphylococcus epidermidis (strain ATCC 12228 / FDA PCI 1200), this protein is 2-succinylbenzoate--CoA ligase.